We begin with the raw amino-acid sequence, 235 residues long: Segregation and condensation protein A (235 aa).

It belongs to the ScpA family. In terms of assembly, component of a cohesin-like complex composed of ScpA, ScpB and the Smc homodimer, in which ScpA and ScpB bind to the head domain of Smc. The presence of the three proteins is required for the association of the complex with DNA.

The protein resides in the cytoplasm. Participates in chromosomal partition during cell division. May act via the formation of a condensin-like complex containing Smc and ScpB that pull DNA away from mid-cell into both cell halves. The sequence is that of Segregation and condensation protein A from Streptococcus uberis (strain ATCC BAA-854 / 0140J).